The primary structure comprises 150 residues: Putative pre-16S rRNA nuclease (150 aa).

The protein belongs to the YqgF nuclease family.

Its subcellular location is the cytoplasm. Its function is as follows. Could be a nuclease involved in processing of the 5'-end of pre-16S rRNA. This chain is Putative pre-16S rRNA nuclease, found in Protochlamydia amoebophila (strain UWE25).